The chain runs to 226 residues: RPA-interacting protein A (226 aa).

The interaction with importin beta stretch occupies residues 1–45; that stretch reads MEAERRHRALYKGTTPPWKETYRKRCVERLKRNRSKLLDKFRQVG. An interaction with RPA1 region spans residues 49–171; it reads HGGVGGSFLV…QCGVYINTQS (123 aa). The RIP-type zinc finger occupies 144–219; that stretch reads CPVCNRNYLT…ASLFMSCQEC (76 aa).

Interacts directly with the rpa1 subunit of RPA complex. Interacts with importin beta, but not with importin alpha. Forms a complex with the RPA complex and importin beta, which is dissociated by Ran-GTP.

It is found in the nucleus. Its function is as follows. Mediates the import of RPA complex into the nucleus, via its interaction with importin beta. This is RPA-interacting protein A (rpain-a) from Xenopus laevis (African clawed frog).